The following is a 78-amino-acid chain: Large ribosomal subunit protein bL28 (78 aa).

The disordered stretch occupies residues 1–21 (MSRVCQLSGKRANNGMAVSHS).

The protein belongs to the bacterial ribosomal protein bL28 family.

The protein is Large ribosomal subunit protein bL28 of Synechococcus sp. (strain RCC307).